The sequence spans 234 residues: RNA-binding protein pno1 (234 aa).

Residues 1–39 (MPTQDSAAKQADDGFQLVQKKSRKRKMTMDMDDADPKAG) are disordered. One can recognise a KH domain in the interval 158 to 207 (LARCIGRLAGKGGRTKFTIENVTKTRIVLADSKVHILGSYQNIRAARTAL).

Belongs to the PNO1 family.

It is found in the nucleus. The protein localises to the nucleolus. The protein is RNA-binding protein pno1 of Ixodes scapularis (Black-legged tick).